We begin with the raw amino-acid sequence, 514 residues long: MDVIKKKHWWQSDALKWSVLGLLGLLVGYLVVLMYAQGEYLFAITTLILSSAGLYIFANRKAYAWRYVYPGMAGMGLFVLFPLVCTIAIAFTNYSSTNQLTFERAQEVLLDRSWQAGKTYNFGLYPAGDEWQLALSDGETGKNYLSDAFKFGGEQKLQLKETTAQPEGERANLRVITQNRQALSDITAILPDGNKVMMSSLRQFSGTQPLYTLDGDGTLTNNQSGVKYRPNNQIGFYQSITADGNWGDEKLSPGYTVTTGWKNFTRVFTDEGIQKPFLAIFVWTVVFSLITVFLTVAVGMVLACLVQWEALRGKAVYRVLLILPYAVPSFISILIFKGLFNQSFGEINMMLSALFGVKPAWFSDPTTARTMLIIVNTWLGYPYMMILCMGLLKAIPDDLYEASAMDGAGLFQNFFKITLPLLIKPLTPLMIASFAFNFNNFVLIQLLTNGGPDRLGTTTPAGYTDLLVNYTYRIAFEGGGGQDFGLAAAIATLIFLLVGALAIVNLKATRMKFD.

Over 1–13 the chain is Cytoplasmic; it reads MDVIKKKHWWQSD. A helical membrane pass occupies residues 14-34; it reads ALKWSVLGLLGLLVGYLVVLM. Residues 35–37 are Periplasmic-facing; that stretch reads YAQ. The chain crosses the membrane as a helical span at residues 38 to 58; sequence GEYLFAITTLILSSAGLYIFA. Residues 59–70 lie on the Cytoplasmic side of the membrane; the sequence is NRKAYAWRYVYP. A helical membrane pass occupies residues 71–91; it reads GMAGMGLFVLFPLVCTIAIAF. Topologically, residues 92-276 are periplasmic; sequence TNYSSTNQLT…VFTDEGIQKP (185 aa). A helical membrane pass occupies residues 277 to 297; it reads FLAIFVWTVVFSLITVFLTVA. Residues 281 to 505 form the ABC transmembrane type-1 domain; that stretch reads FVWTVVFSLI…LLVGALAIVN (225 aa). Residues 298–319 lie on the Cytoplasmic side of the membrane; the sequence is VGMVLACLVQWEALRGKAVYRV. Residues 320-340 form a helical membrane-spanning segment; that stretch reads LLILPYAVPSFISILIFKGLF. Over 341–371 the chain is Periplasmic; that stretch reads NQSFGEINMMLSALFGVKPAWFSDPTTARTM. Residues 372 to 392 form a helical membrane-spanning segment; sequence LIIVNTWLGYPYMMILCMGLL. Over 393-416 the chain is Cytoplasmic; it reads KAIPDDLYEASAMDGAGLFQNFFK. Residues 417 to 437 form a helical membrane-spanning segment; the sequence is ITLPLLIKPLTPLMIASFAFN. The Periplasmic segment spans residues 438–483; the sequence is FNNFVLIQLLTNGGPDRLGTTTPAGYTDLLVNYTYRIAFEGGGGQD. Residues 484–504 traverse the membrane as a helical segment; it reads FGLAAAIATLIFLLVGALAIV. Residues 505 to 514 are Cytoplasmic-facing; it reads NLKATRMKFD.

This sequence belongs to the binding-protein-dependent transport system permease family. MalFG subfamily. The complex is composed of two ATP-binding proteins (MalK), two transmembrane proteins (MalG and MalF) and a solute-binding protein (MalE).

It is found in the cell inner membrane. Its function is as follows. Part of the ABC transporter complex MalEFGK involved in maltose/maltodextrin import. Probably responsible for the translocation of the substrate across the membrane. The polypeptide is Maltose/maltodextrin transport system permease protein MalF (malF) (Shigella flexneri).